We begin with the raw amino-acid sequence, 447 residues long: ATP-dependent protease ATPase subunit HslU (447 aa).

ATP is bound by residues isoleucine 18, 60 to 65 (GVGKTE), aspartate 259, glutamate 325, and arginine 397.

Belongs to the ClpX chaperone family. HslU subfamily. A double ring-shaped homohexamer of HslV is capped on each side by a ring-shaped HslU homohexamer. The assembly of the HslU/HslV complex is dependent on binding of ATP.

It localises to the cytoplasm. ATPase subunit of a proteasome-like degradation complex; this subunit has chaperone activity. The binding of ATP and its subsequent hydrolysis by HslU are essential for unfolding of protein substrates subsequently hydrolyzed by HslV. HslU recognizes the N-terminal part of its protein substrates and unfolds these before they are guided to HslV for hydrolysis. This chain is ATP-dependent protease ATPase subunit HslU, found in Burkholderia ambifaria (strain ATCC BAA-244 / DSM 16087 / CCUG 44356 / LMG 19182 / AMMD) (Burkholderia cepacia (strain AMMD)).